Here is a 37-residue protein sequence, read N- to C-terminus: Diptericin (37 aa).

Residues 1–37 (DLHIPPPDNKINWPQLSGGGGGSPKTGYDININAQQK) are disordered.

The protein belongs to the attacin/sarcotoxin-2 family. Synthesized by the fat body and secreted into the hemolymph.

It is found in the secreted. Its function is as follows. Acute phase protein with antibacterial activity against the Gram-negative bacteria E.coli (MIC=6.25 ug/ml) and S.sonnei (MIC=12.5 ug/ml). Lacks antibacterial activity against the Gram-negative bacteria P.vulgaris, P.rettgeri and P.aeruginosa, and against the Gram-positive bacteria B.subtilis, S.aureus, M.luteus, B.megaterium, C.bovis and E.cloacae. The chain is Diptericin from Sarcophaga peregrina (Flesh fly).